The following is a 372-amino-acid chain: 4-hydroxy-3-methylbut-2-en-1-yl diphosphate synthase (flavodoxin) (372 aa).

[4Fe-4S] cluster-binding residues include Cys-270, Cys-273, Cys-305, and Glu-312.

This sequence belongs to the IspG family. It depends on [4Fe-4S] cluster as a cofactor.

It carries out the reaction (2E)-4-hydroxy-3-methylbut-2-enyl diphosphate + oxidized [flavodoxin] + H2O + 2 H(+) = 2-C-methyl-D-erythritol 2,4-cyclic diphosphate + reduced [flavodoxin]. Its pathway is isoprenoid biosynthesis; isopentenyl diphosphate biosynthesis via DXP pathway; isopentenyl diphosphate from 1-deoxy-D-xylulose 5-phosphate: step 5/6. Converts 2C-methyl-D-erythritol 2,4-cyclodiphosphate (ME-2,4cPP) into 1-hydroxy-2-methyl-2-(E)-butenyl 4-diphosphate. The protein is 4-hydroxy-3-methylbut-2-en-1-yl diphosphate synthase (flavodoxin) of Shewanella amazonensis (strain ATCC BAA-1098 / SB2B).